The primary structure comprises 742 residues: MYTQTLYELSQEAERLLQLSRQQLQLLEKMPLSVPGDDAPQLALPWSQPNIAERHAMLNNELRKISRLEMVLAIVGTMKAGKSTTINAIVGTEVLPNRNRPMTALPTLIRHTPGQKEPVLHFSHVAPIDCLIQQLQQRLRDCDIKHLTDVLEIDKDMRALMQRIENGVAFEKYYLGAQPIFHCLKSLNDLVRLAKALDVDFPFSAYAAIEHIPVIEVEFVHLAGLESYPGQLTLLDTPGPNEAGQPHLQKMLNQQLARASAVLAVLDYTQLKSISDEEVREAILAVGQSVPLYVLVNKFDQQDRNSDDADQVRALISGTLMKGCITPQQIFPVSSMWGYLANRARHELANNGKLPAPEQQRWVEDFAHAALGRRWRHADLADLEHIRHAADQLWEDSLFAQPIQALLHAAYANASLYALRSAAHKLLNYAQQAREYLDFRAHGLNVACEQLRQNIHQVEESLQLLQLNQAQVSGEIKHEIELALTSANHFLRQQQDALNAQLAALFQDDSEPLSEMRTRCETLLQTAQNTISRDFTLRFAELESTLCRVLTDVIRPIEQQVKMELSESGFRPGFHFPVFHGVVPHFNTRQLFSAVISRQDATDEQSTRLGVVRETFSRWLNQPDWGRGNEKSPTETVDYSVLQRALSAEVDLYCQQMAKVLAEQVDESVTAGMNTFFAEFASCLTELQTRLRESLALRQQNESVVRLMQQQLQQTVMTHGWIYTDAQLLRDDIQTLFTAERY.

Residues 41–45 (QLALP) form a clamp-binding consensus region. One can recognise a Dynamin-type G domain in the interval 66–402 (SRLEMVLAIV…LWEDSLFAQP (337 aa)). Positions 76–83 (GTMKAGKS) are G1 motif. Residues 102–104 (MTA) form a G2 motif region. Residues 236–239 (DTPG) form a G3 motif region. Residues 297-300 (NKFD) are G4 motif. The segment at 331–334 (FPVS) is G5 motif. Residues 440–472 (RAHGLNVACEQLRQNIHQVEESLQLLQLNQAQV) adopt a coiled-coil conformation.

It belongs to the TRAFAC class dynamin-like GTPase superfamily. Dynamin/Fzo/YdjA family. In terms of assembly, forms homooligomers. Binds to the beta sliding clamp processivity factor (DnaN) in the presence and absence of DNA, may bind to the clamp itself as homodimers or trimers. Homooligomers may be able to bind more than 1 clamp complex.

It localises to the cytoplasm. In terms of biological role, important for the colocalization of sister nascent DNA strands after replication fork passage during DNA replication, and for positioning and subsequent partitioning of sister chromosomes. Does not have GTPase activity on its own. In Escherichia coli, this protein is Clamp-binding protein CrfC (crfC).